The primary structure comprises 318 residues: NADH-ubiquinone oxidoreductase chain 1 (318 aa).

8 helical membrane passes run 1 to 21, 71 to 91, 101 to 121, 145 to 165, 172 to 192, 224 to 244, 253 to 273, and 294 to 314; these read MLPITNSLTYIIPILIAVAFL, LLILSPILALTTAMLIWTPIP, LGLLSILAISSMAVNSTLWAG, VTLGIILLSILILTGGFTMQL, HIWLLTTSWPLTMMWFISTLA, FFLAEYTNIISMNLLTCIMFI, ELFLINLVTKTLLLSLTFLWI, and LPLTMALCLLQASLLVSISGI.

Belongs to the complex I subunit 1 family.

The protein localises to the mitochondrion inner membrane. It catalyses the reaction a ubiquinone + NADH + 5 H(+)(in) = a ubiquinol + NAD(+) + 4 H(+)(out). In terms of biological role, core subunit of the mitochondrial membrane respiratory chain NADH dehydrogenase (Complex I) that is believed to belong to the minimal assembly required for catalysis. Complex I functions in the transfer of electrons from NADH to the respiratory chain. The immediate electron acceptor for the enzyme is believed to be ubiquinone. The sequence is that of NADH-ubiquinone oxidoreductase chain 1 (MT-ND1) from Varanus rudicollis (Rough-necked monitor lizard).